The following is a 465-amino-acid chain: MSSLFRHIPSVDRFLQDLEQDRALADLPRQMLKDLVAEFLDLCREEIRAGVVTDESALAFTTLAARAGAYVRTRSRPHFRRVVNATGVVIHTNLGRSILAEEAVLAVAEGCRHYSNLEMDLDTGQRGSRYSHVEKLLCRLTGAEAGLVVNNNAAAVLLVLDTLAKGREVVVSRGQLVEIGGSFRIPEVMKKSGAVLREVGATNRTHLRDYAEAIGPDTAMLMKVHTSNYRIIGFHKEVDLPDLVALGRERGLSTFEDLGSGNLFDFSPYGFMPEPTVQQVLRSGVDVVTFSGDKLLGGPQAGVIVGRREFIERIKKNQLNRALRIDKMTLAALEATLRLYLDPEQARRTVPTLAMITAAPKELHARAGRLRRRLSRDLAGLASVAVKPGFSRVGGGSFPEQDLSTTLVSVAPTGMDVDSLRQGLLAEDIPVVGRVEDGAFCLDPRTLMDAEFALVAGAMKAVLAR.

At Lys294 the chain carries N6-(pyridoxal phosphate)lysine.

This sequence belongs to the SelA family. Pyridoxal 5'-phosphate is required as a cofactor.

Its subcellular location is the cytoplasm. The catalysed reaction is L-seryl-tRNA(Sec) + selenophosphate + H(+) = L-selenocysteinyl-tRNA(Sec) + phosphate. Its pathway is aminoacyl-tRNA biosynthesis; selenocysteinyl-tRNA(Sec) biosynthesis; selenocysteinyl-tRNA(Sec) from L-seryl-tRNA(Sec) (bacterial route): step 1/1. Converts seryl-tRNA(Sec) to selenocysteinyl-tRNA(Sec) required for selenoprotein biosynthesis. The sequence is that of L-seryl-tRNA(Sec) selenium transferase (selA) from Desulfomicrobium baculatum (Desulfovibrio baculatus).